Here is a 548-residue protein sequence, read N- to C-terminus: Glucose-6-phosphate isomerase (548 aa).

The Proton donor role is filled by E359. Residues H390 and K510 contribute to the active site.

Belongs to the GPI family.

The protein resides in the cytoplasm. It catalyses the reaction alpha-D-glucose 6-phosphate = beta-D-fructose 6-phosphate. The protein operates within carbohydrate biosynthesis; gluconeogenesis. Its pathway is carbohydrate degradation; glycolysis; D-glyceraldehyde 3-phosphate and glycerone phosphate from D-glucose: step 2/4. Its function is as follows. Catalyzes the reversible isomerization of glucose-6-phosphate to fructose-6-phosphate. In Gloeobacter violaceus (strain ATCC 29082 / PCC 7421), this protein is Glucose-6-phosphate isomerase.